The primary structure comprises 164 residues: CDP-archaeol synthase (164 aa).

Transmembrane regions (helical) follow at residues 3 to 23, 53 to 73, 77 to 97, and 126 to 146; these read LFVFFALIWPPYVANGSAVLA, GLAIGVVLGTVVGYLPNLLHP, LLDALILSVAALLGDLLGAFI, and SLYADVPVEYIIAASVVTPII.

Belongs to the CDP-archaeol synthase family. The cofactor is Mg(2+).

The protein localises to the cell membrane. It carries out the reaction 2,3-bis-O-(geranylgeranyl)-sn-glycerol 1-phosphate + CTP + H(+) = CDP-2,3-bis-O-(geranylgeranyl)-sn-glycerol + diphosphate. The protein operates within membrane lipid metabolism; glycerophospholipid metabolism. Functionally, catalyzes the formation of CDP-2,3-bis-(O-geranylgeranyl)-sn-glycerol (CDP-archaeol) from 2,3-bis-(O-geranylgeranyl)-sn-glycerol 1-phosphate (DGGGP) and CTP. This reaction is the third ether-bond-formation step in the biosynthesis of archaeal membrane lipids. The protein is CDP-archaeol synthase of Pyrobaculum arsenaticum (strain DSM 13514 / JCM 11321 / PZ6).